Consider the following 134-residue polypeptide: Ribosome-binding factor A (134 aa).

The interval 115–134 is disordered; sequence EDQRQERGEIPPGSDELQPD.

This sequence belongs to the RbfA family. In terms of assembly, monomer. Binds 30S ribosomal subunits, but not 50S ribosomal subunits or 70S ribosomes.

The protein localises to the cytoplasm. Functionally, one of several proteins that assist in the late maturation steps of the functional core of the 30S ribosomal subunit. Associates with free 30S ribosomal subunits (but not with 30S subunits that are part of 70S ribosomes or polysomes). Required for efficient processing of 16S rRNA. May interact with the 5'-terminal helix region of 16S rRNA. This is Ribosome-binding factor A from Synechococcus sp. (strain CC9902).